A 235-amino-acid chain; its full sequence is tRNA pseudouridine synthase B (235 aa).

The active-site Nucleophile is Asp-48.

Belongs to the pseudouridine synthase TruB family. Type 1 subfamily.

The catalysed reaction is uridine(55) in tRNA = pseudouridine(55) in tRNA. Functionally, responsible for synthesis of pseudouridine from uracil-55 in the psi GC loop of transfer RNAs. This Phocaeicola vulgatus (strain ATCC 8482 / DSM 1447 / JCM 5826 / CCUG 4940 / NBRC 14291 / NCTC 11154) (Bacteroides vulgatus) protein is tRNA pseudouridine synthase B.